A 195-amino-acid polypeptide reads, in one-letter code: HTH-type transcriptional regulator BetI (195 aa).

An HTH tetR-type domain is found at 8 to 68 (SIRRRQLIDA…ATMRDITSQL (61 aa)). The segment at residues 31–50 (TIAQIARRAGVSTGIISHYF) is a DNA-binding region (H-T-H motif).

It participates in amine and polyamine biosynthesis; betaine biosynthesis via choline pathway [regulation]. Its function is as follows. Repressor involved in the biosynthesis of the osmoprotectant glycine betaine. It represses transcription of the choline transporter BetT and the genes of BetAB involved in the synthesis of glycine betaine. This is HTH-type transcriptional regulator BetI from Shigella flexneri serotype 5b (strain 8401).